Here is a 225-residue protein sequence, read N- to C-terminus: MKHVLKNDWGPLLAPEFEKEYYRELDVFLKEEYSIHVVYPKIEDIFNALEYTSYENTKVVILGQDPYHGPNQAHGLSFSVQPGVKTPPSLLNMYKELRDEYGYDIPNNGYLVKWAEQGVLLLNTVLTVRQGEANSHKGKGWEHFTDRVIELLNEREKPVIFILWGRHAQAKKKLITNSNHHIIESVHPSPLSARRGFFGSKPYSKVNTILANMGEREIDWEIPNL.

The Proton acceptor role is filled by aspartate 65.

This sequence belongs to the uracil-DNA glycosylase (UDG) superfamily. UNG family.

The protein resides in the cytoplasm. The catalysed reaction is Hydrolyzes single-stranded DNA or mismatched double-stranded DNA and polynucleotides, releasing free uracil.. Functionally, excises uracil residues from the DNA which can arise as a result of misincorporation of dUMP residues by DNA polymerase or due to deamination of cytosine. The protein is Uracil-DNA glycosylase of Bacillus thuringiensis (strain Al Hakam).